A 476-amino-acid chain; its full sequence is Glutamate--tRNA ligase (476 aa).

The 'HIGH' region signature appears at 8–18 (PSPTGTLHIGT). A 'KMSKS' region motif is present at residues 247–251 (KLSKR). Lysine 250 is an ATP binding site.

It belongs to the class-I aminoacyl-tRNA synthetase family. Glutamate--tRNA ligase type 1 subfamily. Monomer.

The protein localises to the cytoplasm. The enzyme catalyses tRNA(Glu) + L-glutamate + ATP = L-glutamyl-tRNA(Glu) + AMP + diphosphate. Its function is as follows. Catalyzes the attachment of glutamate to tRNA(Glu) in a two-step reaction: glutamate is first activated by ATP to form Glu-AMP and then transferred to the acceptor end of tRNA(Glu). The chain is Glutamate--tRNA ligase from Synechococcus sp. (strain WH7803).